The following is a 213-amino-acid chain: Thymidylate kinase (213 aa).

Residue 10 to 17 (GLEGAGKT) coordinates ATP.

It belongs to the thymidylate kinase family.

It catalyses the reaction dTMP + ATP = dTDP + ADP. Its function is as follows. Phosphorylation of dTMP to form dTDP in both de novo and salvage pathways of dTTP synthesis. This is Thymidylate kinase from Salmonella choleraesuis (strain SC-B67).